The chain runs to 229 residues: Clathrin light chain B (229 aa).

Low complexity predominate over residues 1-17 (MADDFGFFSSSESGAPE). Residues 1–82 (MADDFGFFSS…NGDVFQEANG (82 aa)) form a disordered region. A phosphoserine mark is found at Ser-11 and Ser-13. A compositionally biased stretch (polar residues) spans 58 to 73 (GPTSGAGSEDMGTTVN). An involved in binding clathrin heavy chain region spans residues 93-155 (ADRLTQEPES…QVEKNKINNR (63 aa)). At Thr-187 the chain carries Phosphothreonine. The cysteines at positions 199 and 209 are disulfide-linked. Lys-204 carries the N6-acetyllysine modification. Position 217 is a phosphoserine (Ser-217).

This sequence belongs to the clathrin light chain family. Clathrin coats are formed from molecules containing 3 heavy chains and 3 light chains. Interacts (via N-terminus) with HIP1. Interacts with HIP1R.

It is found in the cytoplasmic vesicle membrane. The protein resides in the membrane. It localises to the coated pit. Clathrin is the major protein of the polyhedral coat of coated pits and vesicles. The chain is Clathrin light chain B (CLTB) from Homo sapiens (Human).